The primary structure comprises 261 residues: MGYLKKVGMCISLLIVIIFVTSCGGGNKITGDSKETQIKKSFAKTLDMYPIKNLDDLYDKEGYRDGEFKKGDKGTWGISSAMVKQPKGKIMRSRGMYLFLNRNTRTAKGYFIVDVTSNDTLKKTEDKEKRYPVKMVNNKIIPIGPINDEGIKKEIENFKFFSQYGDFKGLKNYQNGDYSYNSEAPTYSAKFQLSNDDYNVKQLRKMYDIQTKKAPKLLLKCTGDLKGSSIGHKDIEFTFVENQEENVFFTDSLEFTPSEDY.

The signal sequence occupies residues 1-22 (MGYLKKVGMCISLLIVIIFVTS). The N-palmitoyl cysteine moiety is linked to residue Cys-23. Residue Cys-23 is the site of S-diacylglycerol cysteine attachment.

This sequence belongs to the staphylococcal tandem lipoprotein family.

The protein localises to the cell membrane. This is an uncharacterized protein from Staphylococcus aureus (strain bovine RF122 / ET3-1).